We begin with the raw amino-acid sequence, 123 residues long: Proteasome assembly chaperone 4 (123 aa).

It belongs to the PSMG4 family. Interacts with PSMG3. Associates with alpha subunits of the 20S proteasome.

Chaperone protein which promotes assembly of the 20S proteasome. The protein is Proteasome assembly chaperone 4 of Homo sapiens (Human).